The sequence spans 75 residues: Brevinin-2HS2A (75 aa).

Residues Met-1–Cys-22 form the signal peptide. The propeptide occupies Gln-23–Val-40. Residues Cys-69 and Cys-75 are joined by a disulfide bond.

It belongs to the frog skin active peptide (FSAP) family. Brevinin subfamily. As to expression, expressed by the skin glands.

The protein resides in the secreted. Has antimicrobial activity against some Gram-positive bacteria and fungi but has no activity against a range of Gram-negative bacteria except P.faecalis. Has antimicrobial activity against the Gram-positive bacteria S.aureus ATCC 25923 (MIC=19 uM), B.licheniformis X39 (MIC=37.5 uM) and R.rhodochrous X15 (MIC=9.5 uM), is virtually inactive against E.faecium 091299 (MIC=150 uM) and S.carnosus KHS (MIC=150 uM) and inactive against E.faecalis 981. Active against the Gram-negative bacterium P.faecalis X29 (MIC=9.5 uM) and is inactive against E.coli, P.aeruginosa and S.typhi. Active against C.albicans ATCC 2002 (MIC=19 uM) and is also active against the slime mold 090223 (MIC=37.5 uM). Has extremely low hemolytic activity against human erythrocytes (LC(50)=300 uM). This chain is Brevinin-2HS2A, found in Odorrana hainanensis (Odor frog).